A 334-amino-acid polypeptide reads, in one-letter code: Inositol 2-dehydrogenase (334 aa).

The protein belongs to the Gfo/Idh/MocA family. In terms of assembly, homotetramer.

It carries out the reaction myo-inositol + NAD(+) = scyllo-inosose + NADH + H(+). Its function is as follows. Involved in the oxidation of myo-inositol (MI) to 2-keto-myo-inositol (2KMI or 2-inosose). The polypeptide is Inositol 2-dehydrogenase (Cereibacter sphaeroides (strain ATCC 17029 / ATH 2.4.9) (Rhodobacter sphaeroides)).